The sequence spans 139 residues: Arsenate reductase (139 aa).

Catalysis depends on nucleophile residues C10, C82, and C89. 2 disulfides stabilise this stretch: C10–C82 and C82–C89.

This sequence belongs to the low molecular weight phosphotyrosine protein phosphatase family. Thioredoxin-coupled ArsC subfamily.

The protein localises to the cytoplasm. The catalysed reaction is arsenate + [thioredoxin]-dithiol + H(+) = arsenite + [thioredoxin]-disulfide + H2O. Functionally, catalyzes the reduction of arsenate [As(V)] to arsenite [As(III)]. The polypeptide is Arsenate reductase (Halalkalibacterium halodurans (strain ATCC BAA-125 / DSM 18197 / FERM 7344 / JCM 9153 / C-125) (Bacillus halodurans)).